We begin with the raw amino-acid sequence, 134 residues long: Small ribosomal subunit protein uS8 (134 aa).

It belongs to the universal ribosomal protein uS8 family. In terms of assembly, part of the 30S ribosomal subunit. Contacts proteins S5 and S12.

One of the primary rRNA binding proteins, it binds directly to 16S rRNA central domain where it helps coordinate assembly of the platform of the 30S subunit. This is Small ribosomal subunit protein uS8 from Thermotoga neapolitana (strain ATCC 49049 / DSM 4359 / NBRC 107923 / NS-E).